Consider the following 208-residue polypeptide: Adapter protein MecA (208 aa).

This sequence belongs to the MecA family. As to quaternary structure, homodimer.

Its function is as follows. Enables the recognition and targeting of unfolded and aggregated proteins to the ClpC protease or to other proteins involved in proteolysis. The chain is Adapter protein MecA from Exiguobacterium sibiricum (strain DSM 17290 / CCUG 55495 / CIP 109462 / JCM 13490 / 255-15).